The sequence spans 216 residues: Protein Syd (216 aa).

Belongs to the Syd family.

It is found in the cell inner membrane. In terms of biological role, interacts with the SecY protein in vivo. May bind preferentially to an uncomplexed state of SecY, thus functioning either as a chelating agent for excess SecY in the cell or as a regulatory factor that negatively controls the translocase function. This chain is Protein Syd, found in Shewanella baltica (strain OS185).